We begin with the raw amino-acid sequence, 315 residues long: Acetyl-coenzyme A carboxylase carboxyl transferase subunit alpha (315 aa).

The CoA carboxyltransferase C-terminal domain occupies 40–293 (LQDKSKTLTE…REELSSQLAM (254 aa)).

Belongs to the AccA family. In terms of assembly, acetyl-CoA carboxylase is a heterohexamer composed of biotin carboxyl carrier protein (AccB), biotin carboxylase (AccC) and two subunits each of ACCase subunit alpha (AccA) and ACCase subunit beta (AccD).

It localises to the cytoplasm. The enzyme catalyses N(6)-carboxybiotinyl-L-lysyl-[protein] + acetyl-CoA = N(6)-biotinyl-L-lysyl-[protein] + malonyl-CoA. It participates in lipid metabolism; malonyl-CoA biosynthesis; malonyl-CoA from acetyl-CoA: step 1/1. Component of the acetyl coenzyme A carboxylase (ACC) complex. First, biotin carboxylase catalyzes the carboxylation of biotin on its carrier protein (BCCP) and then the CO(2) group is transferred by the carboxyltransferase to acetyl-CoA to form malonyl-CoA. In Pseudomonas savastanoi pv. phaseolicola (strain 1448A / Race 6) (Pseudomonas syringae pv. phaseolicola (strain 1448A / Race 6)), this protein is Acetyl-coenzyme A carboxylase carboxyl transferase subunit alpha.